The chain runs to 1006 residues: Pleckstrin homology domain-containing family G member 5 (1006 aa).

Disordered stretches follow at residues Met1 to Asp71, Pro148 to Ala198, and Glu212 to Trp242. Residues Asp36–Ser45 show a composition bias toward acidic residues. 2 stretches are compositionally biased toward basic and acidic residues: residues Pro151–Lys165 and Glu183–Leu194. The span at Ser224–Trp242 shows a compositional bias: low complexity. In terms of domain architecture, DH spans His336–Cys528. Residues Gln584–Asn684 form the PH domain. Disordered stretches follow at residues Arg690–Gly754, Asp768–Gly820, and Ala837–Pro863. The segment covering Leu704–Asp726 has biased composition (acidic residues). Composition is skewed to polar residues over residues Ser727 to Gly754 and Thr769 to Asp785. Thr729 is subject to Phosphothreonine. Ser734 carries the post-translational modification Phosphoserine. Residues Glu786–Leu803 are compositionally biased toward low complexity. Residues Pro847–Pro856 show a composition bias toward pro residues. Phosphoserine occurs at positions 851, 876, and 881. The interval Ala950–Gln979 is disordered.

Interacts with GIPC1/synectin and RHOA. Predominantly expressed in the peripheral nervous system and brain. Highest expression is observed in heart, lung, kidney, testis and moderate expression is present in spleen, pancreas, skeletal muscle, ovary and liver. Weakly expressed in glioblastoma (GBM) cell lines.

The protein localises to the cytoplasm. Its subcellular location is the perinuclear region. The protein resides in the cell membrane. It localises to the cell junction. It is found in the cell projection. The protein localises to the lamellipodium. Its function is as follows. Functions as a guanine exchange factor (GEF) for RAB26 and thus regulates autophagy of synaptic vesicles in axon terminal of motoneurons. Involved in the control of neuronal cell differentiation. Plays a role in angiogenesis through regulation of endothelial cells chemotaxis. Also affects the migration, adhesion, and matrix/bone degradation in macrophages and osteoclasts. This chain is Pleckstrin homology domain-containing family G member 5 (PLEKHG5), found in Homo sapiens (Human).